The chain runs to 211 residues: FMN-dependent NADH:quinone oxidoreductase 3 (211 aa).

102–105 (MWNF) is an FMN binding site.

Belongs to the azoreductase type 1 family. In terms of assembly, homodimer. The cofactor is FMN.

It carries out the reaction 2 a quinone + NADH + H(+) = 2 a 1,4-benzosemiquinone + NAD(+). It catalyses the reaction N,N-dimethyl-1,4-phenylenediamine + anthranilate + 2 NAD(+) = 2-(4-dimethylaminophenyl)diazenylbenzoate + 2 NADH + 2 H(+). Its function is as follows. Quinone reductase that provides resistance to thiol-specific stress caused by electrophilic quinones. Functionally, also exhibits azoreductase activity. Catalyzes the reductive cleavage of the azo bond in aromatic azo compounds to the corresponding amines. The protein is FMN-dependent NADH:quinone oxidoreductase 3 of Bacillus cereus (strain ATCC 10987 / NRS 248).